The primary structure comprises 918 residues: Chitin synthase C (918 aa).

Residues 1 to 63 form a disordered region; the sequence is MSYNRLGDPY…EMPSSDRLAE (63 aa). The segment covering 22–37 has biased composition (low complexity); sequence NPSSLSNRSPSPGRPL. Transmembrane regions (helical) follow at residues 562–581, 605–625, 637–657, and 672–692; these read WLNGSFFAAVYAITHFYQLW, LFAWFGIGNFFLVFHILTTYL, VLGVVFEWLYLATLVTCFVLS, and MVYLWVFIMIYLAFAAVFVTV. N-linked (GlcNAc...) asparagine glycosylation is present at Asn712. 3 helical membrane-spanning segments follow: residues 715–735, 845–865, and 890–910; these read FFSIIVSLGSTYVMWFIASII, VVLVWVFCNFALGAVVLSSAG, and VVLWSVAGLSIFKFLGAMWFL.

The protein belongs to the chitin synthase family. Class I subfamily. As to expression, mainly expressed in hyphae and conidiphores. Relatively strongly expressed in young cleistothecia and in mature ascospores, but negligible in Huelle cells.

The protein resides in the cell membrane. It localises to the cell septum. The protein localises to the cell tip. The catalysed reaction is [(1-&gt;4)-N-acetyl-beta-D-glucosaminyl](n) + UDP-N-acetyl-alpha-D-glucosamine = [(1-&gt;4)-N-acetyl-beta-D-glucosaminyl](n+1) + UDP + H(+). In terms of biological role, polymerizes chitin, a structural polymer of the cell wall and septum, by transferring the sugar moiety of UDP-GlcNAc to the non-reducing end of the growing chitin polymer. ChsC and chsA share critical functions in hyphal wall integrity and differentiation. ChsA and chsC share also overlapping roles in septum formation. The protein is Chitin synthase C of Emericella nidulans (strain FGSC A4 / ATCC 38163 / CBS 112.46 / NRRL 194 / M139) (Aspergillus nidulans).